A 412-amino-acid polypeptide reads, in one-letter code: NADH-quinone oxidoreductase subunit D (412 aa).

Belongs to the complex I 49 kDa subunit family. As to quaternary structure, NDH-1 is composed of 14 different subunits. Subunits NuoB, C, D, E, F, and G constitute the peripheral sector of the complex.

It is found in the cell inner membrane. It carries out the reaction a quinone + NADH + 5 H(+)(in) = a quinol + NAD(+) + 4 H(+)(out). Its function is as follows. NDH-1 shuttles electrons from NADH, via FMN and iron-sulfur (Fe-S) centers, to quinones in the respiratory chain. The immediate electron acceptor for the enzyme in this species is believed to be a menaquinone. Couples the redox reaction to proton translocation (for every two electrons transferred, four hydrogen ions are translocated across the cytoplasmic membrane), and thus conserves the redox energy in a proton gradient. In Flavobacterium psychrophilum (strain ATCC 49511 / DSM 21280 / CIP 103535 / JIP02/86), this protein is NADH-quinone oxidoreductase subunit D.